The chain runs to 514 residues: MYSQRFGIVQREVKGPTPKVVIVRAKPPKGQGAEHHLQRIQHSHQKHHAILASIKSIERDRLKTEWDQHNDCKFVDSLVKARVKDAMQGFIINTEERRNKLRELLASEENEYFTEMQLKEETIEEKKDRMRDKIRLLREKKEKERQDFVAEKLDQQFRERCQELRAELFCIHQKAVCEERKAQIAFNEELKRQKVVEEQMFSKLWEEDRLAKERREAKEERRQKELVENTRLGLNAQVTSIQAQRQAAQRLKEEEALLVENENAQVKLENEQDKLKKQKTKQEIRAALQKALQEKMERMQQEYREEQDLNMKLMQNALQSLQEETDKKKQKKEDMRREQKIYYQYLAQRHEEEKAQEKELDRMLEKEKEKKFAEKDKELRLEKEARKQLLNEVMCTRKLQVQEKLQRKAKEQEERTMEQERINEGLKELNCEERENFIRRCSLAQEYRKQLQMQICSQQQAREAEEEEERREFEAGIAAEKSFQDKIQGILSTHQVVPRNIHPMRRACSTKLPP.

A coiled-coil region spans residues 207–429; sequence EDRLAKERRE…ERINEGLKEL (223 aa).

Belongs to the CFAP53 family. As to quaternary structure, microtubule inner protein component of sperm flagellar doublet microtubules. Interacts with PIERCE1 and PIERCE2; the interactions link outer dynein arms docking complex (ODA-DC) to the internal microtubule inner proteins (MIP) in cilium axoneme. Interacts with CCDC38. Interacts with CCDC42 and IFT88. Interacts with centriolar satellite proteins PIBF1/CEP90 and PCM1. Interacts with dyneins DNAIC1, DNAIC2 AND DNAH11 and with ODA-DC component ODAD4/TTC25. As to expression, expressed in trachea multiciliated cells.

It localises to the cytoplasm. The protein localises to the cytoskeleton. It is found in the cilium axoneme. Its subcellular location is the flagellum axoneme. The protein resides in the microtubule organizing center. It localises to the centrosome. The protein localises to the centriolar satellite. It is found in the spindle pole. In terms of biological role, microtubule inner protein (MIP) part of the dynein-decorated doublet microtubules (DMTs) in cilia axoneme, which is required for motile cilia beating. Regulates motility patterns of both 9+0 and 9+2 motile cilia through differential localization and recruitment of axonemal dynein components. Required for centriolar satellite integrity and non-motile cilium assembly. Required for motile cilium formation. Through its role in beating of primary cilia, involved in the establishment of organ laterality during embryogenesis. Required for sperm flagellum biogenesis and is essential for male fertility. The protein is Cilia- and flagella-associated protein 53 (CFAP53) of Bos taurus (Bovine).